The chain runs to 145 residues: Large ribosomal subunit protein uL15 (145 aa).

The interval 1-58 is disordered; sequence MFNLLKPKGASKRRKIVGRGPGSGLGKTSGRGQKGQKARNTSPRLGFEGGQTPLYRRL. The span at 19 to 33 shows a compositional bias: gly residues; the sequence is RGPGSGLGKTSGRGQ.

The protein belongs to the universal ribosomal protein uL15 family. In terms of assembly, part of the 50S ribosomal subunit.

Binds to the 23S rRNA. This Borrelia garinii subsp. bavariensis (strain ATCC BAA-2496 / DSM 23469 / PBi) (Borreliella bavariensis) protein is Large ribosomal subunit protein uL15.